Consider the following 110-residue polypeptide: V-type proton ATPase subunit G 1 (110 aa).

This sequence belongs to the V-ATPase G subunit family. V-ATPase is a heteromultimeric enzyme composed of a peripheral catalytic V1 complex (components A to H) attached to an integral membrane V0 proton pore complex (components: a, c, c', c'' and d).

In terms of biological role, catalytic subunit of the peripheral V1 complex of vacuolar ATPase (V-ATPase). V-ATPase is responsible for acidifying a variety of intracellular compartments in eukaryotic cells. In Nicotiana tabacum (Common tobacco), this protein is V-type proton ATPase subunit G 1 (VATG1).